A 244-amino-acid polypeptide reads, in one-letter code: MTDSHVPHPESPAVEEGEERPHRRIKSFVMRAGRMTEGQQRGLDQGLPLYGLSLTDTPVDFDQVFGRSAPRTLEIGFGMGHSLLEMAAAAPEHDFIGVEVHSPGVGALLNGVLTQGLTNVRVYDCDAIEVLNRCVADNSLDRLMLFFPDPWHKSRHHKRRIVQPEFAALVRSKLKVGGVFHMATDWGPYAEYMLEVMSVAPGYRNQAEDNQYVPRPAERPITKFERRGEKLGHGVWDLKFEKVD.

The tract at residues 1–24 is disordered; the sequence is MTDSHVPHPESPAVEEGEERPHRR. Residues E74, E99, D126, and D149 each contribute to the S-adenosyl-L-methionine site. Residue D149 is part of the active site. Substrate contacts are provided by residues K153, D185, and 222–225; that span reads TKFE.

The protein belongs to the class I-like SAM-binding methyltransferase superfamily. TrmB family.

It carries out the reaction guanosine(46) in tRNA + S-adenosyl-L-methionine = N(7)-methylguanosine(46) in tRNA + S-adenosyl-L-homocysteine. Its pathway is tRNA modification; N(7)-methylguanine-tRNA biosynthesis. In terms of biological role, catalyzes the formation of N(7)-methylguanine at position 46 (m7G46) in tRNA. The polypeptide is tRNA (guanine-N(7)-)-methyltransferase (Pseudomonas syringae pv. syringae (strain B728a)).